The chain runs to 594 residues: Solute carrier family 13 member 1 (594 aa).

A run of 5 helical transmembrane segments spans residues 13–33 (FLLV…IRTK), 40–60 (ILFV…ITAL), 77–97 (VASA…CLAT), 113–133 (VMMV…STAF), and 134–154 (LSMW…VEAV). Asparagine 174 carries N-linked (GlcNAc...) asparagine glycosylation. A compositionally biased stretch (basic and acidic residues) spans 192–220 (TNEKKEKTKPAPGSSHDKGKVSRKMETEK). A disordered region spans residues 192–226 (TNEKKEKTKPAPGSSHDKGKVSRKMETEKNAVTGA). 8 helical membrane-spanning segments follow: residues 239–259 (LMCL…ITGT), 283–303 (SWFL…WIWL), 347–367 (IVTL…DPGF), 380–400 (GYVT…LIPA), 461–481 (LSPL…LIVT), 487–507 (ASNP…AEAI), 511–531 (PLQI…LPVA), and 552–572 (AGLG…FTWI). The N-linked (GlcNAc...) asparagine glycan is linked to asparagine 590.

This sequence belongs to the SLC13A/DASS transporter (TC 2.A.47) family. NADC subfamily. In terms of tissue distribution, highly expressed in kidney and ileum, detected at lower levels in duodenum/jejunum and colon, and at very low levels in cecum, testis, adrenal and adipose tissues. Expressed in the kidney.

It localises to the apical cell membrane. It catalyses the reaction sulfate(out) + 3 Na(+)(out) = sulfate(in) + 3 Na(+)(in). The enzyme catalyses selenate(out) + 3 Na(+)(out) = selenate(in) + 3 Na(+)(in). It carries out the reaction thiosulfate(out) + 3 Na(+)(out) = thiosulfate(in) + 3 Na(+)(in). Functionally, sodium:sulfate symporter that mediates sulfate reabsorption in the kidney and small intestine. Can also mediate the transport of selenate and thiosulfate. In Mus musculus (Mouse), this protein is Solute carrier family 13 member 1 (Slc13a1).